Here is an 862-residue protein sequence, read N- to C-terminus: MAQLSFNAALKMNALGNKAIHDPTNCRAKSERQMMWVCSRSGRTRVKMSRGSGGPGPVVMMSSSTGTSKVVSETSSTIVDDIPRLSANYHGDLWHHNVIQTLETPFRESSTYQERADELVVKIKDMFNALGDGDISPSAYDTAWVARLATISSDGSEKPRFPQALNWVFNNQLQDGSWGIESHFSLCDRLLNTTNSVIALSVWKTGHSQVQQGAEFIAENLRLLNEEDELSPDFQIIFPALLQKAKALGINLPYDLPFIKYLSTTREARLTDVSAAADNIPANMLNALEGLEEVIDWNKIMRFQSKDGSFLSSPASTACVLMNTGDEKCFTFLNNLLDKFGGCVPCMYSIDLLERLSLVDNIEHLGIGRHFKQEIKGALDYVYRHWSERGIGWGRDSLVPDLNTTALGLRTLRMHGYNVSSDVLNNFKDENGRFFSSAGQTHVELRSVVNLFRASDLAFPDERAMDDARKFAEPYLREALATKISTNTKLFKEIEYVVEYPWHMSIPRLEARSYIDSYDDNYVWQRKTLYRMPSLSNSKCLELAKLDFNIVQSLHQEELKLLTRWWKESGMADINFTRHRVAEVYFSSATFEPEYSATRIAFTKIGCLQVLFDDMADIFATLDELKSFTEGVKRWDTSLLHEIPECMQTCFKVWFKLMEEVNNDVVKVQGRDMLAHIRKPWELYFNCYVQEREWLEAGYIPTFEEYLKTYAISVGLGPCTLQPILLMGELVKDDVVEKVHYPSNMFELVSLSWRLTNDTKTYQAEKARGQQASGIACYMKDNPGATEEDAIKHICRVVDRALKEASFEYFKPSNDIPMGCKSFIFNLRLCVQIFYKFIDGYGIANEEIKDYIRKVYIDPIQV.

Mg(2+)-binding residues include aspartate 613, aspartate 617, asparagine 757, threonine 761, and glutamate 765. Positions 613–617 match the DDXXD motif motif; that stretch reads DDMAD.

The protein belongs to the terpene synthase family. The cofactor is Mg(2+).

The enzyme catalyses (2E,6E,10E)-geranylgeranyl diphosphate = taxa-4(5),11(12)-diene + diphosphate. It functions in the pathway alkaloid biosynthesis; taxol biosynthesis; taxa-4(20),11-dien-5alpha-ol from geranylgeranyl diphosphate: step 1/2. Functionally, catalyzes the cyclization of the ubiquitous isoprenoid intermediate geranylgeranyl diphosphate to taxa-4,11-diene, the parent olefin with a taxane skeleton. The chain is Taxadiene synthase (TDC1) from Taxus brevifolia (Pacific yew).